We begin with the raw amino-acid sequence, 395 residues long: 1-deoxy-D-xylulose 5-phosphate reductoisomerase (395 aa).

NADPH-binding residues include Thr-10, Gly-11, Ser-12, Ile-13, Ala-36, and Asn-123. Lys-124 is a 1-deoxy-D-xylulose 5-phosphate binding site. Glu-125 lines the NADPH pocket. Asp-149 serves as a coordination point for Mn(2+). The 1-deoxy-D-xylulose 5-phosphate site is built by Ser-150, Glu-151, Ser-185, and His-208. Glu-151 lines the Mn(2+) pocket. Gly-214 is an NADPH binding site. The 1-deoxy-D-xylulose 5-phosphate site is built by Ser-221, Asn-226, Lys-227, and Glu-230. Glu-230 is a binding site for Mn(2+).

It belongs to the DXR family. The cofactor is Mg(2+). Mn(2+) serves as cofactor.

The enzyme catalyses 2-C-methyl-D-erythritol 4-phosphate + NADP(+) = 1-deoxy-D-xylulose 5-phosphate + NADPH + H(+). Its pathway is isoprenoid biosynthesis; isopentenyl diphosphate biosynthesis via DXP pathway; isopentenyl diphosphate from 1-deoxy-D-xylulose 5-phosphate: step 1/6. Functionally, catalyzes the NADPH-dependent rearrangement and reduction of 1-deoxy-D-xylulose-5-phosphate (DXP) to 2-C-methyl-D-erythritol 4-phosphate (MEP). This chain is 1-deoxy-D-xylulose 5-phosphate reductoisomerase, found in Shewanella amazonensis (strain ATCC BAA-1098 / SB2B).